Here is a 352-residue protein sequence, read N- to C-terminus: tRNA uridine(34) hydroxylase (352 aa).

The Rhodanese domain occupies 144 to 238 (SDPDVILIDT…YLEEVPASDS (95 aa)). C198 acts as the Cysteine persulfide intermediate in catalysis.

Belongs to the TrhO family.

It carries out the reaction uridine(34) in tRNA + AH2 + O2 = 5-hydroxyuridine(34) in tRNA + A + H2O. Functionally, catalyzes oxygen-dependent 5-hydroxyuridine (ho5U) modification at position 34 in tRNAs. The protein is tRNA uridine(34) hydroxylase of Psychrobacter cryohalolentis (strain ATCC BAA-1226 / DSM 17306 / VKM B-2378 / K5).